A 301-amino-acid polypeptide reads, in one-letter code: GTPase Era (301 aa).

The region spanning 7–175 is the Era-type G domain; sequence YCGFIAIVGR…AAIVRKHLPE (169 aa). The tract at residues 15-22 is G1; sequence GRPNVGKS. 15 to 22 serves as a coordination point for GTP; that stretch reads GRPNVGKS. The segment at 41–45 is G2; that stretch reads QTTRH. The interval 62-65 is G3; the sequence is DTPG. Residues 62–66 and 124–127 each bind GTP; these read DTPGL and NKVD. The G4 stretch occupies residues 124–127; that stretch reads NKVD. Residues 154-156 are G5; it reads ISA. The region spanning 206–283 is the KH type-2 domain; the sequence is LGAELPYSVT…HLELWVKVKS (78 aa).

This sequence belongs to the TRAFAC class TrmE-Era-EngA-EngB-Septin-like GTPase superfamily. Era GTPase family. As to quaternary structure, monomer.

It is found in the cytoplasm. Its subcellular location is the cell inner membrane. An essential GTPase that binds both GDP and GTP, with rapid nucleotide exchange. Plays a role in 16S rRNA processing and 30S ribosomal subunit biogenesis and possibly also in cell cycle regulation and energy metabolism. The chain is GTPase Era from Escherichia fergusonii (strain ATCC 35469 / DSM 13698 / CCUG 18766 / IAM 14443 / JCM 21226 / LMG 7866 / NBRC 102419 / NCTC 12128 / CDC 0568-73).